A 155-amino-acid chain; its full sequence is SsrA-binding protein (155 aa).

The protein belongs to the SmpB family.

The protein resides in the cytoplasm. Its function is as follows. Required for rescue of stalled ribosomes mediated by trans-translation. Binds to transfer-messenger RNA (tmRNA), required for stable association of tmRNA with ribosomes. tmRNA and SmpB together mimic tRNA shape, replacing the anticodon stem-loop with SmpB. tmRNA is encoded by the ssrA gene; the 2 termini fold to resemble tRNA(Ala) and it encodes a 'tag peptide', a short internal open reading frame. During trans-translation Ala-aminoacylated tmRNA acts like a tRNA, entering the A-site of stalled ribosomes, displacing the stalled mRNA. The ribosome then switches to translate the ORF on the tmRNA; the nascent peptide is terminated with the 'tag peptide' encoded by the tmRNA and targeted for degradation. The ribosome is freed to recommence translation, which seems to be the essential function of trans-translation. This is SsrA-binding protein from Clostridium acetobutylicum (strain ATCC 824 / DSM 792 / JCM 1419 / IAM 19013 / LMG 5710 / NBRC 13948 / NRRL B-527 / VKM B-1787 / 2291 / W).